We begin with the raw amino-acid sequence, 359 residues long: 3-dehydroquinate synthase (359 aa).

NAD(+) is bound by residues Asp71 to Lys76, Gly105 to Asp109, Thr129 to Thr130, Lys142, and Lys151. Glu184, His247, and His263 together coordinate Zn(2+).

It belongs to the sugar phosphate cyclases superfamily. Dehydroquinate synthase family. The cofactor is NAD(+). Co(2+) serves as cofactor. Zn(2+) is required as a cofactor.

It localises to the cytoplasm. The catalysed reaction is 7-phospho-2-dehydro-3-deoxy-D-arabino-heptonate = 3-dehydroquinate + phosphate. It participates in metabolic intermediate biosynthesis; chorismate biosynthesis; chorismate from D-erythrose 4-phosphate and phosphoenolpyruvate: step 2/7. Functionally, catalyzes the conversion of 3-deoxy-D-arabino-heptulosonate 7-phosphate (DAHP) to dehydroquinate (DHQ). This chain is 3-dehydroquinate synthase, found in Leifsonia xyli subsp. xyli (strain CTCB07).